The chain runs to 223 residues: MSKFQSNFNQKIDYVFKVVLIGDSAVGKSQLLARFSRNEFSIESKATIGVEFQTRTLEIDRKTIKAQIWDTAGQERYRAVTSAYYRGAVGAMLVYDITKRQSFDHVARWLEELRGHADKNIVIMLIGNKTDLGTLRAVPTEDAKEFAQRENLFFMETSALDSNNVEPSFLTVLTEIYRIVSKKNLVANEEGESGGDSSLLQGTKIVVAGEETESKGKGCCGTS.

22–29 lines the GTP pocket; it reads GDSAVGKS. An Effector region motif is present at residues 44-52; it reads SKATIGVEF. GTP contacts are provided by residues 70-74, 128-131, and 158-159; these read DTAGQ, NKTD, and SA. 2 S-geranylgeranyl cysteine lipidation sites follow: Cys-219 and Cys-220.

This sequence belongs to the small GTPase superfamily. Rab family.

It localises to the cell membrane. Its function is as follows. Intracellular vesicle trafficking and protein transport. The protein is Ras-related protein RABA4c (RABA4C) of Arabidopsis thaliana (Mouse-ear cress).